The chain runs to 254 residues: Phosphorelay intermediate protein rdeA (254 aa).

Residues 26-123 enclose the HPt domain; the sequence is EKEFTFELLD…KILSDFKKNW (98 aa). H65 is subject to Phosphohistidine. Positions 124–254 are disordered; it reads DKNHGEGGSD…SNSPTKIQTK (131 aa). Residues 131–143 are compositionally biased toward acidic residues; that stretch reads GSDDGGDDNESEP. Residues 146-160 are compositionally biased toward low complexity; sequence NNNNDGSSVNNNDSS. Residues 166-186 show a composition bias toward basic and acidic residues; the sequence is KDIENKNTDENTGKNLNERSK. Low complexity predominate over residues 220–238; sequence NNTNSSSNNNSKNENGLNS. A compositionally biased stretch (polar residues) spans 239–254; it reads KQPQTSSNSPTKIQTK.

The phosphorelay mechanism involves the sequential transfer of a phosphate group from 'Asp-212' of pde2 to His-65 of rdeA. In vitro, dephosphorylated by dokA.

It is found in the cytoplasm. Its function is as follows. Phosphorelay protein that supplies phosphate to regA or accepts phosphate from regA; depending on the relative concentration of the phosphodonor proteins. In vitro, acts as a substrate for cheA (bacterial kinase). Plays a role in the development. ypd1 (yeast) can complement rdeA defect. The chain is Phosphorelay intermediate protein rdeA (rdeA) from Dictyostelium discoideum (Social amoeba).